A 191-amino-acid polypeptide reads, in one-letter code: Peptidyl-tRNA hydrolase (191 aa).

Y17 contributes to the tRNA binding site. H22 acts as the Proton acceptor in catalysis. TRNA-binding residues include Y68, N70, and N116.

The protein belongs to the PTH family. Monomer.

The protein localises to the cytoplasm. The enzyme catalyses an N-acyl-L-alpha-aminoacyl-tRNA + H2O = an N-acyl-L-amino acid + a tRNA + H(+). Hydrolyzes ribosome-free peptidyl-tRNAs (with 1 or more amino acids incorporated), which drop off the ribosome during protein synthesis, or as a result of ribosome stalling. In terms of biological role, catalyzes the release of premature peptidyl moieties from peptidyl-tRNA molecules trapped in stalled 50S ribosomal subunits, and thus maintains levels of free tRNAs and 50S ribosomes. This chain is Peptidyl-tRNA hydrolase, found in Mycobacterium avium (strain 104).